Here is a 205-residue protein sequence, read N- to C-terminus: Glycerol-3-phosphate acyltransferase (205 aa).

Residues 1–3 (MSA) lie on the Periplasmic side of the membrane. A helical transmembrane segment spans residues 4–24 (IAPGMILIAYLCGSISSAILV). At 25 to 52 (CRLCGLPDPRTSGSGNPGATNVLRIGGK) the chain is on the cytoplasmic side. A helical membrane pass occupies residues 53-73 (GAAVAVLIFDVLKGMLPVWGA). Over 74-80 (YELGVSP) the chain is Periplasmic. Residues 81 to 101 (FWLGLIAIAACLGHIWPVFFG) form a helical membrane-spanning segment. Residues 102-111 (FKGGKGVATA) are Cytoplasmic-facing. Residues 112–132 (FGAIAPISWDLTGVMAGTWLL) traverse the membrane as a helical segment. Residues 133–137 (TVLLS) are Periplasmic-facing. Residues 138 to 158 (GYSSLGAIVSALIAPFYVWWF) traverse the membrane as a helical segment. The Cytoplasmic portion of the chain corresponds to 159 to 205 (KPQFTFPVSMLSCLILLRHHDNIQRLWRRQETKIWTKFKRKREKDPE).

The protein belongs to the PlsY family. In terms of assembly, probably interacts with PlsX.

It localises to the cell inner membrane. The enzyme catalyses sn-glycerol 3-phosphate + an acyl-CoA = a 1-acyl-sn-glycero-3-phosphate + CoA. The catalysed reaction is a fatty acyl-[ACP] + sn-glycerol 3-phosphate = a 1-acyl-sn-glycero-3-phosphate + holo-[ACP]. Its pathway is lipid metabolism; phospholipid metabolism. Functionally, catalyzes the transfer of an acyl group from acyl-ACP to glycerol-3-phosphate (G3P) to form lysophosphatidic acid (LPA). This enzyme can also utilize acyl-CoA as fatty acyl donor, but not acyl-PO(4). This Shigella flexneri serotype 5b (strain 8401) protein is Glycerol-3-phosphate acyltransferase.